The sequence spans 261 residues: Probable membrane transporter protein PD_1894 (261 aa).

The next 8 helical transmembrane spans lie at 6–26, 45–64, 78–98, 99–119, 150–170, 175–195, 205–225, and 239–259; these read LIVTIGSGGLVGFALGLLGGG, HIAIGTSAVAVSVNAYANLI, VIFALVGTLGAFLGSSIGMLI, DGQRLLLLFGLLMAMVGLLML, AASGFFGIGGGFLIVPALIFA, TINAIGSSLLAVGSFGLITTL, WTIAMEFIVGGITGGGLGTLL, and VFGLIVIAVAIYVIWRSWASL.

Belongs to the 4-toluene sulfonate uptake permease (TSUP) (TC 2.A.102) family.

The protein resides in the cell membrane. This is Probable membrane transporter protein PD_1894 from Xylella fastidiosa (strain Temecula1 / ATCC 700964).